The following is a 252-amino-acid chain: Trans-aconitate 2-methyltransferase (252 aa).

It belongs to the methyltransferase superfamily. Tam family.

The protein localises to the cytoplasm. It catalyses the reaction trans-aconitate + S-adenosyl-L-methionine = (E)-3-(methoxycarbonyl)pent-2-enedioate + S-adenosyl-L-homocysteine. Its function is as follows. Catalyzes the S-adenosylmethionine monomethyl esterification of trans-aconitate. This chain is Trans-aconitate 2-methyltransferase, found in Escherichia coli (strain UTI89 / UPEC).